A 108-amino-acid chain; its full sequence is Glutaredoxin-1 (108 aa).

In terms of domain architecture, Glutaredoxin spans 3–106 (EEFVQQRLAN…DILLSIGVLR (104 aa)). Cys-23 and Cys-26 are oxidised to a cystine.

It belongs to the glutaredoxin family.

It localises to the virion. In terms of biological role, displays thioltransferase and dehydroascorbate reductase activities. In Cynomys gunnisoni (Gunnison's prairie dog), this protein is Glutaredoxin-1 (OPG075).